We begin with the raw amino-acid sequence, 502 residues long: ATP synthase subunit alpha (502 aa).

The segment at 115 to 135 is disordered; the sequence is VDGLGPINTTNTRPIESPAPG. Residue 169–176 participates in ATP binding; sequence GDRQTGKT.

Belongs to the ATPase alpha/beta chains family. In terms of assembly, F-type ATPases have 2 components, CF(1) - the catalytic core - and CF(0) - the membrane proton channel. CF(1) has five subunits: alpha(3), beta(3), gamma(1), delta(1), epsilon(1). CF(0) has three main subunits: a(1), b(2) and c(9-12). The alpha and beta chains form an alternating ring which encloses part of the gamma chain. CF(1) is attached to CF(0) by a central stalk formed by the gamma and epsilon chains, while a peripheral stalk is formed by the delta and b chains.

The protein resides in the cell membrane. It carries out the reaction ATP + H2O + 4 H(+)(in) = ADP + phosphate + 5 H(+)(out). Produces ATP from ADP in the presence of a proton gradient across the membrane. The alpha chain is a regulatory subunit. This Bacillus anthracis (strain A0248) protein is ATP synthase subunit alpha.